A 336-amino-acid chain; its full sequence is Urokinase plasminogen activator surface receptor (336 aa).

Residues 1 to 23 form the signal peptide; it reads MGHPLLLPLLLLLLHTGVPASWG. UPAR/Ly6 domains follow at residues 24-111, 116-208, and 215-302; these read LRCM…VTFP, LECI…LSLA, and HRCY…EDIQ. 3 cysteine pairs are disulfide-bonded: Cys26–Cys47, Cys29–Cys35, and Cys40–Cys68. Asn75 carries N-linked (GlcNAc...) asparagine glycosylation. Cystine bridges form between Cys94–Cys99, Cys118–Cys145, Cys121–Cys128, Cys138–Cys170, Cys176–Cys193, Cys194–Cys199, Cys217–Cys245, Cys220–Cys228, Cys238–Cys264, Cys270–Cys288, and Cys289–Cys294. Asn195 and Asn223 each carry an N-linked (GlcNAc...) asparagine glycan.

Monomer. Interacts (via the UPAR/Ly6 domains) with SRPX2. Interacts with MRC2. Interacts with FAP (seprase); the interaction occurs at the cell surface of invadopodia membrane. Interacts with SORL1 (via N-terminal ectodomain); this interaction decreases PLAUR internalization. The ternary complex composed of PLAUR-PLAU-SERPINE1 also interacts with SORL1.

The protein localises to the cell membrane. It is found in the cell projection. Its subcellular location is the invadopodium membrane. In terms of biological role, acts as a receptor for urokinase plasminogen activator. Plays a role in localizing and promoting plasmin formation. Mediates the proteolysis-independent signal transduction activation effects of U-PA. It is subject to negative-feedback regulation by U-PA which cleaves it into an inactive form. This chain is Urokinase plasminogen activator surface receptor (PLAUR), found in Aotus trivirgatus (Three-striped night monkey).